The sequence spans 515 residues: 2-isopropylmalate synthase (515 aa).

The Pyruvate carboxyltransferase domain occupies isoleucine 4–lysine 266. Residues aspartate 13, histidine 201, histidine 203, and asparagine 237 each contribute to the Mn(2+) site. A regulatory domain region spans residues glutamine 391 to proline 515.

This sequence belongs to the alpha-IPM synthase/homocitrate synthase family. LeuA type 1 subfamily. As to quaternary structure, homodimer. Mn(2+) serves as cofactor.

The protein resides in the cytoplasm. It catalyses the reaction 3-methyl-2-oxobutanoate + acetyl-CoA + H2O = (2S)-2-isopropylmalate + CoA + H(+). It participates in amino-acid biosynthesis; L-leucine biosynthesis; L-leucine from 3-methyl-2-oxobutanoate: step 1/4. In terms of biological role, catalyzes the condensation of the acetyl group of acetyl-CoA with 3-methyl-2-oxobutanoate (2-ketoisovalerate) to form 3-carboxy-3-hydroxy-4-methylpentanoate (2-isopropylmalate). The protein is 2-isopropylmalate synthase of Geobacillus thermodenitrificans (strain NG80-2).